Reading from the N-terminus, the 271-residue chain is Glutamate racemase (271 aa).

Substrate contacts are provided by residues 10 to 11 (DS) and 42 to 43 (YG). The active-site Proton donor/acceptor is cysteine 73. 74-75 (NS) is a substrate binding site. Residue cysteine 183 is the Proton donor/acceptor of the active site. 184–185 (TH) is a substrate binding site.

This sequence belongs to the aspartate/glutamate racemases family.

The catalysed reaction is L-glutamate = D-glutamate. It functions in the pathway cell wall biogenesis; peptidoglycan biosynthesis. Functionally, provides the (R)-glutamate required for cell wall biosynthesis. This Saccharopolyspora erythraea (strain ATCC 11635 / DSM 40517 / JCM 4748 / NBRC 13426 / NCIMB 8594 / NRRL 2338) protein is Glutamate racemase.